Here is a 257-residue protein sequence, read N- to C-terminus: 4-chloro-allylglycine synthase (257 aa).

Positions 112, 119, 173, 203, 207, and 210 each coordinate Fe cation.

It depends on Fe(2+) as a cofactor.

The enzyme catalyses 4-chloro-L-lysine + AH2 + O2 = L-2-amino-4-chloropent-4-enoate + formaldehyde + A + NH4(+) + H2O. It participates in amino-acid metabolism. Its pathway is antibiotic biosynthesis. In terms of biological role, involved in the biosynthesis of terminal alkyne-containing amino acids such as L-propargylglycine (Pra) and L-beta-ethynylserine, that are produced as antibiotics by S.cattleya. Catalyzes an oxidative C-C bond cleavage in 4-chloro-L-lysine to form 4-chloro-allyl-L-glycine (also named L-2-amino-4-chloropent-4-enoate), with release of formaldehyde and ammonia. Is also able to react with L-lysine directly to produce allylglycine in vitro. The protein is 4-chloro-allylglycine synthase of Streptantibioticus cattleyicolor (strain ATCC 35852 / DSM 46488 / JCM 4925 / NBRC 14057 / NRRL 8057) (Streptomyces cattleya).